Consider the following 303-residue polypeptide: Kynurenine formamidase (303 aa).

Positions 95–99 match the HGGXW motif; that stretch reads HGGYW. Catalysis depends on Ser164, which acts as the Nucleophile. Catalysis depends on residues Asp247 and His279.

The protein belongs to the kynurenine formamidase family. Homodimer.

It localises to the cytoplasm. The protein resides in the cytosol. Its subcellular location is the nucleus. It catalyses the reaction N-formyl-L-kynurenine + H2O = L-kynurenine + formate + H(+). It functions in the pathway amino-acid degradation; L-tryptophan degradation via kynurenine pathway; L-kynurenine from L-tryptophan: step 2/2. Catalyzes the hydrolysis of N-formyl-L-kynurenine to L-kynurenine, the second step in the kynurenine pathway of tryptophan degradation. Kynurenine may be further oxidized to nicotinic acid, NAD(H) and NADP(H). Required for elimination of toxic metabolites. This chain is Kynurenine formamidase, found in Homo sapiens (Human).